Reading from the N-terminus, the 635-residue chain is Threonine--tRNA ligase (635 aa).

Positions 1 to 61 constitute a TGS domain; the sequence is MIKITLKDGK…HKDSSLEILT (61 aa). Positions 242–532 are catalytic; it reads DHRKLGKELD…LIEQYAGAFP (291 aa). Zn(2+) is bound by residues C333, H384, and H509.

The protein belongs to the class-II aminoacyl-tRNA synthetase family. Homodimer. Zn(2+) is required as a cofactor.

The protein localises to the cytoplasm. It carries out the reaction tRNA(Thr) + L-threonine + ATP = L-threonyl-tRNA(Thr) + AMP + diphosphate + H(+). Functionally, catalyzes the attachment of threonine to tRNA(Thr) in a two-step reaction: L-threonine is first activated by ATP to form Thr-AMP and then transferred to the acceptor end of tRNA(Thr). Also edits incorrectly charged L-seryl-tRNA(Thr). The protein is Threonine--tRNA ligase of Clostridium botulinum (strain Langeland / NCTC 10281 / Type F).